Consider the following 226-residue polypeptide: MKVTYHGHSVVKIETNGKTIFIDPFITGNGATDLKLEDVKADVILLTHGHGDHVGDTVQLAKKNNALVIAPFELATYLGWQGVNTHPMHIGGAHQFDFGKVKLTQAFHGSGYVTEDKQIIYLGMPAGILFTAEGKTIYHAGDTGLFSDMKLIGERNSIDVAFLPIGDNFTMGPEDAAVAAEWLRAKIVVPIHYNTFPVIAQDPHQFVALLPDGVGRVLKPGEGIEL.

The protein belongs to the UPF0173 family.

The sequence is that of UPF0173 metal-dependent hydrolase GWCH70_2696 from Geobacillus sp. (strain WCH70).